A 217-amino-acid chain; its full sequence is Phosphatidylserine decarboxylase proenzyme (217 aa).

Serine 183 serves as the catalytic Schiff-base intermediate with substrate; via pyruvic acid. Serine 183 carries the post-translational modification Pyruvic acid (Ser); by autocatalysis.

This sequence belongs to the phosphatidylserine decarboxylase family. PSD-A subfamily. In terms of assembly, heterodimer of a large membrane-associated beta subunit and a small pyruvoyl-containing alpha subunit. Pyruvate is required as a cofactor. In terms of processing, is synthesized initially as an inactive proenzyme. Formation of the active enzyme involves a self-maturation process in which the active site pyruvoyl group is generated from an internal serine residue via an autocatalytic post-translational modification. Two non-identical subunits are generated from the proenzyme in this reaction, and the pyruvate is formed at the N-terminus of the alpha chain, which is derived from the carboxyl end of the proenzyme. The post-translation cleavage follows an unusual pathway, termed non-hydrolytic serinolysis, in which the side chain hydroxyl group of the serine supplies its oxygen atom to form the C-terminus of the beta chain, while the remainder of the serine residue undergoes an oxidative deamination to produce ammonia and the pyruvoyl prosthetic group on the alpha chain.

It is found in the cell membrane. The catalysed reaction is a 1,2-diacyl-sn-glycero-3-phospho-L-serine + H(+) = a 1,2-diacyl-sn-glycero-3-phosphoethanolamine + CO2. It functions in the pathway phospholipid metabolism; phosphatidylethanolamine biosynthesis; phosphatidylethanolamine from CDP-diacylglycerol: step 2/2. Its function is as follows. Catalyzes the formation of phosphatidylethanolamine (PtdEtn) from phosphatidylserine (PtdSer). The polypeptide is Phosphatidylserine decarboxylase proenzyme (Cupriavidus metallidurans (strain ATCC 43123 / DSM 2839 / NBRC 102507 / CH34) (Ralstonia metallidurans)).